Consider the following 145-residue polypeptide: Large-conductance mechanosensitive channel (145 aa).

Helical transmembrane passes span Val-14–Leu-34, Leu-38–Pro-58, and Gly-81–Val-101.

Belongs to the MscL family. As to quaternary structure, homopentamer.

Its subcellular location is the cell inner membrane. Channel that opens in response to stretch forces in the membrane lipid bilayer. May participate in the regulation of osmotic pressure changes within the cell. This is Large-conductance mechanosensitive channel from Rhizobium johnstonii (strain DSM 114642 / LMG 32736 / 3841) (Rhizobium leguminosarum bv. viciae).